We begin with the raw amino-acid sequence, 93 residues long: UPF0223 protein SAG0995 (93 aa).

Belongs to the UPF0223 family.

The chain is UPF0223 protein SAG0995 from Streptococcus agalactiae serotype V (strain ATCC BAA-611 / 2603 V/R).